The primary structure comprises 681 residues: Hydroxyproline O-galactosyltransferase GALT6 (681 aa).

Residues 1–28 (MRKPKLSKLERLEKFDIFVSLSKQRSVQ) are Cytoplasmic-facing. The chain crosses the membrane as a helical; Signal-anchor for type II membrane protein span at residues 29-49 (ILMAVGLLYMLLITFEIPFVF). Residues 50–681 (KTGLSSLSQD…TGKPQCCNMR (632 aa)) lie on the Lumenal side of the membrane. A disordered region spans residues 57 to 80 (SQDPLTRPEKHNSQRELQERRAPT). Residues 62–78 (TRPEKHNSQRELQERRA) show a composition bias toward basic and acidic residues. Residues 187–401 (NIMELPCGLT…DIDVHSVFAG (215 aa)) form the Galectin domain. N-linked (GlcNAc...) asparagine glycosylation occurs at asparagine 629.

It belongs to the glycosyltransferase 31 family. Requires Mn(2+) as cofactor. Expressed in junveile leaves and stems, and at lower levels in cauline leaves and siliques.

The protein resides in the golgi apparatus membrane. The protein operates within protein modification; protein glycosylation. Possesses hydroxyproline O-galactosyltransferase activity. Transfers galactose from UDP-galactose to hydroxyproline residues in the arabinogalactan proteins (AGPs). Is specific for AGPs containing non-contiguous peptidyl hydroxyproline residues. Utilizes UDP-galactose solely as sugar donor. The addition of galactose onto the peptidyl hydroxyproline residues in AGP core proteins represents the first committed step in arabinogalactan polysaccharide addition. AGP glycans play essential roles in both vegetative and reproductive plant growth. This chain is Hydroxyproline O-galactosyltransferase GALT6, found in Arabidopsis thaliana (Mouse-ear cress).